The sequence spans 201 residues: Peptide deformylase (201 aa).

Fe cation-binding residues include C121 and H163. E164 is a catalytic residue. H167 serves as a coordination point for Fe cation.

Belongs to the polypeptide deformylase family. Fe(2+) serves as cofactor.

The enzyme catalyses N-terminal N-formyl-L-methionyl-[peptide] + H2O = N-terminal L-methionyl-[peptide] + formate. Functionally, removes the formyl group from the N-terminal Met of newly synthesized proteins. Requires at least a dipeptide for an efficient rate of reaction. N-terminal L-methionine is a prerequisite for activity but the enzyme has broad specificity at other positions. The polypeptide is Peptide deformylase (Synechococcus sp. (strain CC9902)).